Consider the following 167-residue polypeptide: 3-isopropylmalate dehydratase small subunit (167 aa).

It belongs to the LeuD family. LeuD type 2 subfamily. As to quaternary structure, heterodimer of LeuC and LeuD.

It catalyses the reaction (2R,3S)-3-isopropylmalate = (2S)-2-isopropylmalate. Its pathway is amino-acid biosynthesis; L-leucine biosynthesis; L-leucine from 3-methyl-2-oxobutanoate: step 2/4. In terms of biological role, catalyzes the isomerization between 2-isopropylmalate and 3-isopropylmalate, via the formation of 2-isopropylmaleate. The chain is 3-isopropylmalate dehydratase small subunit from Oleidesulfovibrio alaskensis (strain ATCC BAA-1058 / DSM 17464 / G20) (Desulfovibrio alaskensis).